The following is a 306-amino-acid chain: UDP-N-acetylenolpyruvoylglucosamine reductase (306 aa).

The region spanning 34-199 is the FAD-binding PCMH-type domain; that stretch reads KSGGAAEWLF…VAATFRGHAE (166 aa). Residue R179 is part of the active site. The disordered stretch occupies residues 215–234; that stretch reads REASQPLRSRTGGSTFKNPQ. Residues 220 to 232 are compositionally biased toward polar residues; the sequence is PLRSRTGGSTFKN. S228 acts as the Proton donor in catalysis. Residue E298 is part of the active site.

Belongs to the MurB family. The cofactor is FAD.

The protein localises to the cytoplasm. It catalyses the reaction UDP-N-acetyl-alpha-D-muramate + NADP(+) = UDP-N-acetyl-3-O-(1-carboxyvinyl)-alpha-D-glucosamine + NADPH + H(+). Its pathway is cell wall biogenesis; peptidoglycan biosynthesis. In terms of biological role, cell wall formation. This chain is UDP-N-acetylenolpyruvoylglucosamine reductase, found in Rhizorhabdus wittichii (strain DSM 6014 / CCUG 31198 / JCM 15750 / NBRC 105917 / EY 4224 / RW1) (Sphingomonas wittichii).